The primary structure comprises 386 residues: MGAGGRMSVAPNNSKCEKKESRSVKRVPHTKPPFTLGQLKQAIPSHCFKRSLLRSFSYVVYDLSLSFIFYSIATTYFHLLPSPITYIAWPVYWAFQGCILTSVWVLGHECGHHAFSEYNWLDDTIGLILHSSLLVPYFSFKISHRRHHSNIASLERDEVFVPRLKSAIPWYSKYLNNPPGRALTLVATLFIGWPLYLAFNVSGRYYDRFACHYDPYSPIYSDRERLQIYISDAMIFVAAYVLYKIAMAKGLAWLVCIYGVPLLIVNALVVTITSLQHTHVALPHYDSSEWDWLRGGLATVDRDYGVFNKIFHNATDTHVIHHLFSSMPHYHGVEATRAIKPILGDYYLFDDTPIHVALWREAKECLFVEPDEGDNNNGVFWYSNKF.

The tract at residues 1 to 28 (MGAGGRMSVAPNNSKCEKKESRSVKRVP) is disordered. 2 consecutive transmembrane segments (helical) span residues 65 to 85 (LSFI…SPIT) and 87 to 107 (IAWP…WVLG). The Histidine box-1 signature appears at 108 to 112 (HECGH). The short motif at 144–148 (HRRHH) is the Histidine box-2 element. The next 3 helical transmembrane spans lie at 182–202 (ALTL…FNVS), 228–248 (IYIS…IAMA), and 250–270 (GLAW…ALVV). The Histidine box-3 signature appears at 318–322 (HVIHH).

The protein belongs to the fatty acid desaturase type 1 family. In terms of tissue distribution, expressed exclusively in developing seeds.

The protein localises to the endoplasmic reticulum membrane. The catalysed reaction is a (9Z,12Z)-octadecadienoyl-containing glycerolipid + 2 Fe(II)-[cytochrome b5] + O2 + 2 H(+) = a (9Z,11E,13E)-octadecatrienoyl-containing glycerolipid + 2 Fe(III)-[cytochrome b5] + 2 H2O. The enzyme catalyses (9Z,12Z,15Z)-octadecatrienoyl-containing glycerolipid + 2 Fe(II)-[cytochrome b5] + O2 + 2 H(+) = a (9Z,11E,13E,15Z)-octadecatetraenoyl-containing glycerolipid + 2 Fe(III)-[cytochrome b5] + 2 H2O. It carries out the reaction a (9Z)-octadecenoyl-containing glycerolipid + 2 Fe(II)-[cytochrome b5] + O2 + 2 H(+) = a (9Z,12E)-octadecadienoyl-containing glycerolipid + 2 Fe(III)-[cytochrome b5] + 2 H2O. It catalyses the reaction a (9Z)-hexadecenoyl-containing glycerolipid + 2 Fe(II)-[cytochrome b5] + O2 + 2 H(+) = a (9Z,12E)-hexadecadienoyl-containing glycerolipid + 2 Fe(III)-[cytochrome b5] + 2 H2O. It participates in lipid metabolism; polyunsaturated fatty acid biosynthesis. Converts linoleic acid to alpha-eleostearic acid (18:3(9Z,11E,13E)) and alpha-linolenic acid to alpha-parinaric acid (18:4(9Z,11E,13E,15Z)). Converts a single cis double bond at carbon 12 to two conjugated trans bonds at positions 11 and 13. Can also act as a 12(E) desaturase when acting on the monounsaturated fatty acids oleate and palmitoleate, stereoselectively introducing a trans double bond. This is Bifunctional desaturase/conjugase FADX from Vernicia fordii (Tung).